The following is a 320-amino-acid chain: Malate dehydrogenase (320 aa).

NAD(+) is bound by residues Gly8–Gly13 and Asp33. The substrate site is built by Arg82 and Arg88. NAD(+)-binding positions include Asn95 and Ile118–Asn120. Asn120 and Arg151 together coordinate substrate. Residue His175 is the Proton acceptor of the active site.

The protein belongs to the LDH/MDH superfamily. MDH type 3 family.

It carries out the reaction (S)-malate + NAD(+) = oxaloacetate + NADH + H(+). Functionally, catalyzes the reversible oxidation of malate to oxaloacetate. The sequence is that of Malate dehydrogenase from Pelagibacter ubique (strain HTCC1062).